Consider the following 179-residue polypeptide: Large ribosomal subunit protein uL5 (179 aa).

It belongs to the universal ribosomal protein uL5 family. Part of the 50S ribosomal subunit; part of the 5S rRNA/L5/L18/L25 subcomplex. Contacts the 5S rRNA and the P site tRNA. Forms a bridge to the 30S subunit in the 70S ribosome.

Functionally, this is one of the proteins that bind and probably mediate the attachment of the 5S RNA into the large ribosomal subunit, where it forms part of the central protuberance. In the 70S ribosome it contacts protein S13 of the 30S subunit (bridge B1b), connecting the 2 subunits; this bridge is implicated in subunit movement. Contacts the P site tRNA; the 5S rRNA and some of its associated proteins might help stabilize positioning of ribosome-bound tRNAs. This Francisella philomiragia subsp. philomiragia (strain ATCC 25017 / CCUG 19701 / FSC 153 / O#319-036) protein is Large ribosomal subunit protein uL5.